A 644-amino-acid polypeptide reads, in one-letter code: Macrolide export ATP-binding/permease protein MacB (644 aa).

Residues 4 to 242 enclose the ABC transporter domain; it reads IECKNINRYF…SNVGRIREKA (239 aa). An ATP-binding site is contributed by 40-47; that stretch reads GQSGSGKS. The next 4 membrane-spanning stretches (helical) occupy residues 270 to 290, 524 to 544, 574 to 594, and 607 to 627; these read LLTMLGIIIGIASVVSVVALG, IALISLVVGGIGVMNIMLVSV, LICVIGGLVGVGLSAAVSLVF, and AMSVIGAVACSTGIGIAFGFM.

This sequence belongs to the ABC transporter superfamily. Macrolide exporter (TC 3.A.1.122) family. In terms of assembly, homodimer.

The protein resides in the cell inner membrane. Functionally, non-canonical ABC transporter that contains transmembrane domains (TMD), which form a pore in the inner membrane, and an ATP-binding domain (NBD), which is responsible for energy generation. Confers resistance against macrolides. The protein is Macrolide export ATP-binding/permease protein MacB of Neisseria meningitidis serogroup B (strain ATCC BAA-335 / MC58).